Reading from the N-terminus, the 185-residue chain is NADH-quinone oxidoreductase subunit B (185 aa).

[4Fe-4S] cluster is bound by residues Cys-37, Cys-38, Cys-103, and Cys-132.

This sequence belongs to the complex I 20 kDa subunit family. As to quaternary structure, NDH-1 is composed of 14 different subunits. Subunits NuoB, C, D, E, F, and G constitute the peripheral sector of the complex. [4Fe-4S] cluster serves as cofactor.

It localises to the cell membrane. It carries out the reaction a quinone + NADH + 5 H(+)(in) = a quinol + NAD(+) + 4 H(+)(out). In terms of biological role, NDH-1 shuttles electrons from NADH, via FMN and iron-sulfur (Fe-S) centers, to quinones in the respiratory chain. The immediate electron acceptor for the enzyme in this species is believed to be a menaquinone. Couples the redox reaction to proton translocation (for every two electrons transferred, four hydrogen ions are translocated across the cytoplasmic membrane), and thus conserves the redox energy in a proton gradient. The sequence is that of NADH-quinone oxidoreductase subunit B from Thermobifida fusca (strain YX).